Here is a 630-residue protein sequence, read N- to C-terminus: 1-deoxy-D-xylulose-5-phosphate synthase (630 aa).

Thiamine diphosphate contacts are provided by residues His72 and 113–115 (GHS). Residue Asp144 participates in Mg(2+) binding. Thiamine diphosphate-binding positions include 145–146 (GA), Asn173, Tyr284, and Glu367. Mg(2+) is bound at residue Asn173.

This sequence belongs to the transketolase family. DXPS subfamily. Homodimer. It depends on Mg(2+) as a cofactor. Thiamine diphosphate is required as a cofactor.

The enzyme catalyses D-glyceraldehyde 3-phosphate + pyruvate + H(+) = 1-deoxy-D-xylulose 5-phosphate + CO2. It functions in the pathway metabolic intermediate biosynthesis; 1-deoxy-D-xylulose 5-phosphate biosynthesis; 1-deoxy-D-xylulose 5-phosphate from D-glyceraldehyde 3-phosphate and pyruvate: step 1/1. In terms of biological role, catalyzes the acyloin condensation reaction between C atoms 2 and 3 of pyruvate and glyceraldehyde 3-phosphate to yield 1-deoxy-D-xylulose-5-phosphate (DXP). This is 1-deoxy-D-xylulose-5-phosphate synthase from Bacillus cereus (strain ATCC 10987 / NRS 248).